Reading from the N-terminus, the 238-residue chain is Uridylate kinase (238 aa).

12 to 15 (KLSG) contacts ATP. G54 provides a ligand contact to UMP. G55 and R59 together coordinate ATP. UMP is bound by residues D74 and 135–142 (TGNPYFTT). ATP-binding residues include T162, N163, Y168, and D171.

Belongs to the UMP kinase family. In terms of assembly, homohexamer.

The protein localises to the cytoplasm. The catalysed reaction is UMP + ATP = UDP + ADP. The protein operates within pyrimidine metabolism; CTP biosynthesis via de novo pathway; UDP from UMP (UMPK route): step 1/1. Its activity is regulated as follows. Inhibited by UTP. Catalyzes the reversible phosphorylation of UMP to UDP. In Bradyrhizobium sp. (strain BTAi1 / ATCC BAA-1182), this protein is Uridylate kinase.